A 207-amino-acid polypeptide reads, in one-letter code: Ion-translocating oxidoreductase complex subunit B (207 aa).

The interval 1–29 (MLDLSIIAYLLIAICLIALIFGALLGYFS) is hydrophobic. In terms of domain architecture, 4Fe-4S spans 35–93 (EADPIVDQIDAILPQSQCGQCGYPGCKPYAEAIANGDQITKCVPGGQPLVVKIAELMGV). Residues Cys52, Cys55, Cys60, Cys76, Cys116, Cys119, Cys122, Cys126, Cys146, Cys149, Cys152, and Cys156 each contribute to the [4Fe-4S] cluster site. 2 consecutive 4Fe-4S ferredoxin-type domains span residues 107-136 (KVAL…GTNK) and 137-166 (AMHT…MIKV).

The protein belongs to the 4Fe4S bacterial-type ferredoxin family. RnfB subfamily. As to quaternary structure, the complex is composed of six subunits: RnfA, RnfB, RnfC, RnfD, RnfE and RnfG. The cofactor is [4Fe-4S] cluster.

It localises to the cell inner membrane. Functionally, part of a membrane-bound complex that couples electron transfer with translocation of ions across the membrane. The polypeptide is Ion-translocating oxidoreductase complex subunit B (Haemophilus ducreyi (strain 35000HP / ATCC 700724)).